Consider the following 577-residue polypeptide: Insulin-like growth factor 2 mRNA-binding protein 1 (577 aa).

RRM domains lie at 2–75 (NKLY…HSVP) and 81–156 (RKIQ…YIPD). 2 positions are modified to phosphoserine: Ser-12 and Ser-73. The disordered stretch occupies residues 160–190 (AQGPENGRRGGFGSRGQPRQGSPVAAGAPAK). Ser-181 carries the post-translational modification Phosphoserine. KH domains lie at 195-260 (DIPL…CKMI), 276-343 (EVPL…EQEI), 405-470 (QEMV…QGRI), and 487-553 (KLET…QRKI). A sufficient for nuclear export region spans residues 310 to 324 (ITISSLQDLTLYNPE). Positions 485–495 (EVKLETHIRVP) are sufficient for nuclear export. Thr-528 is subject to Phosphothreonine.

Belongs to the RRM IMP/VICKZ family. In terms of assembly, can form homodimers and heterodimers with IGF2BP1 and IGF2BP3. Component of the coding region determinant (CRD)-mediated complex, composed of DHX9, HNRNPU, IGF2BP1, SYNCRIP and YBX1. During HCV infection, identified in a HCV IRES-mediated translation complex, at least composed of EIF3C, IGF2BP1, RPS3 and HCV RNA-replicon. Interacts (via the KH domains) with HIV-1 GAG (via the second zinc finger motif of NC). Associates (via the RRM domains and KH domains) with HIV-1 particles. Identified in a mRNP complex, composed of at least DHX9, DDX3X, ELAVL1, HNRNPU, IGF2BP1, ILF3, PABPC1, PCBP2, PTBP2, STAU1, STAU2, SYNCRIP and YBX1. Identified in a IGF2BP1-dependent mRNP granule complex containing untranslated mRNAs. Interacts with DHX9, ELAVL2, HNRNPA2B1, HNRNPC, HNRNPH1, HNRNPU, IGF2BP2, ILF2, and YBX1. Interacts with FMR1. Component of a multisubunit autoregulatory RNP complex (ARC), at least composed of IGF2BP1, PABPC1 and CSDE1/UNR. Directly interacts with PABPC1. Component of a TAU mRNP complex, at least composed of IGF2BP1, ELAVL4 and G3BP. Interacts with ELAVL4 in an RNA-dependent manner. Associates with microtubules and polysomes. Interacts with AGO1 and AGO2. Interacts with ELAVL1 and MATR3. Interacts (via KH3 and KH4 domains) with SEPIN14P20 peptide RBRP; the interaction results in increased binding of IGF2BP1 to N6-methyladenosine (m6A)-containing mRNAs. Phosphorylated at Ser-181 by mTORC2 cotranslationally, promoting binding to the 3'-UTR of IGF2 mRNA. In terms of tissue distribution, mainly expressed in the embryo, including in fetal liver, fetal lung, fetal kidney, fetal thymus (at protein level). Also expressed follicles of ovary, as well as in gonocytes of testis, spermatogonia, semen, oocytes and placenta (at protein level). Expressed in various cancers, including testis and lung cancers (at protein level), as well as kidney, prostate and trachea cancers.

It localises to the nucleus. The protein resides in the cytoplasm. It is found in the perinuclear region. Its subcellular location is the P-body. The protein localises to the stress granule. It localises to the cell projection. The protein resides in the lamellipodium. It is found in the dendrite. Its subcellular location is the dendritic spine. The protein localises to the growth cone. It localises to the filopodium. The protein resides in the axon. Functionally, RNA-binding factor that recruits target transcripts to cytoplasmic protein-RNA complexes (mRNPs). This transcript 'caging' into mRNPs allows mRNA transport and transient storage. It also modulates the rate and location at which target transcripts encounter the translational apparatus and shields them from endonuclease attacks or microRNA-mediated degradation. Preferentially binds to N6-methyladenosine (m6A)-containing mRNAs and increases their stability. Plays a direct role in the transport and translation of transcripts required for axonal regeneration in adult sensory neurons. Regulates localized beta-actin/ACTB mRNA translation, a crucial process for cell polarity, cell migration and neurite outgrowth. Co-transcriptionally associates with the ACTB mRNA in the nucleus. This binding involves a conserved 54-nucleotide element in the ACTB mRNA 3'-UTR, known as the 'zipcode'. The RNP thus formed is exported to the cytoplasm, binds to a motor protein and is transported along the cytoskeleton to the cell periphery. During transport, prevents ACTB mRNA from being translated into protein. When the RNP complex reaches its destination near the plasma membrane, IGF2BP1 is phosphorylated. This releases the mRNA, allowing ribosomal 40S and 60S subunits to assemble and initiate ACTB protein synthesis. Monomeric ACTB then assembles into the subcortical actin cytoskeleton. During neuronal development, key regulator of neurite outgrowth, growth cone guidance and neuronal cell migration, presumably through the spatiotemporal fine tuning of protein synthesis, such as that of ACTB. May regulate mRNA transport to activated synapses. Binds to and stabilizes ABCB1/MDR-1 mRNA. During interstinal wound repair, interacts with and stabilizes PTGS2 transcript. PTGS2 mRNA stabilization may be crucial for colonic mucosal wound healing. Binds to the 3'-UTR of IGF2 mRNA by a mechanism of cooperative and sequential dimerization and regulates IGF2 mRNA subcellular localization and translation. Binds to MYC mRNA, in the coding region instability determinant (CRD) of the open reading frame (ORF), hence preventing MYC cleavage by endonucleases and possibly microRNA targeting to MYC-CRD. Binding to MYC mRNA is enhanced by m6A-modification of the CRD. Binds to the 3'-UTR of CD44 mRNA and stabilizes it, hence promotes cell adhesion and invadopodia formation in cancer cells. Binds to the oncofetal H19 transcript and to the neuron-specific TAU mRNA and regulates their localizations. Binds to and stabilizes BTRC/FBW1A mRNA. Binds to the adenine-rich autoregulatory sequence (ARS) located in PABPC1 mRNA and represses its translation. PABPC1 mRNA-binding is stimulated by PABPC1 protein. Prevents BTRC/FBW1A mRNA degradation by disrupting microRNA-dependent interaction with AGO2. Promotes the directed movement of tumor-derived cells by fine-tuning intracellular signaling networks. Binds to MAPK4 3'-UTR and inhibits its translation. Interacts with PTEN transcript open reading frame (ORF) and prevents mRNA decay. This combined action on MAPK4 (down-regulation) and PTEN (up-regulation) antagonizes HSPB1 phosphorylation, consequently it prevents G-actin sequestration by phosphorylated HSPB1, allowing F-actin polymerization. Hence enhances the velocity of cell migration and stimulates directed cell migration by PTEN-modulated polarization. Interacts with Hepatitis C virus (HCV) 5'-UTR and 3'-UTR and specifically enhances translation at the HCV IRES, but not 5'-cap-dependent translation, possibly by recruiting eIF3. Interacts with HIV-1 GAG protein and blocks the formation of infectious HIV-1 particles. Reduces HIV-1 assembly by inhibiting viral RNA packaging, as well as assembly and processing of GAG protein on cellular membranes. During cellular stress, such as oxidative stress or heat shock, stabilizes target mRNAs that are recruited to stress granules, including CD44, IGF2, MAPK4, MYC, PTEN, RAPGEF2 and RPS6KA5 transcripts. The sequence is that of Insulin-like growth factor 2 mRNA-binding protein 1 (IGF2BP1) from Homo sapiens (Human).